The following is a 277-amino-acid chain: Release factor glutamine methyltransferase (277 aa).

S-adenosyl-L-methionine is bound by residues 120–124, Asp-143, Trp-171, and Asn-186; that span reads GTGSG. A substrate-binding site is contributed by 186 to 189; sequence NPPY.

The protein belongs to the protein N5-glutamine methyltransferase family. PrmC subfamily.

It catalyses the reaction L-glutaminyl-[peptide chain release factor] + S-adenosyl-L-methionine = N(5)-methyl-L-glutaminyl-[peptide chain release factor] + S-adenosyl-L-homocysteine + H(+). Its function is as follows. Methylates the class 1 translation termination release factors RF1/PrfA and RF2/PrfB on the glutamine residue of the universally conserved GGQ motif. The chain is Release factor glutamine methyltransferase from Coxiella burnetii (strain RSA 493 / Nine Mile phase I).